We begin with the raw amino-acid sequence, 464 residues long: Histidine--tRNA ligase (464 aa).

The protein belongs to the class-II aminoacyl-tRNA synthetase family. As to quaternary structure, homodimer.

It is found in the cytoplasm. It catalyses the reaction tRNA(His) + L-histidine + ATP = L-histidyl-tRNA(His) + AMP + diphosphate + H(+). In Stenotrophomonas maltophilia (strain K279a), this protein is Histidine--tRNA ligase.